Consider the following 284-residue polypeptide: MDAIKKKMQAMKLEKDNAVDRAETAEQQSRDAALRAEKAEEEVRSLQKKIQQIENELDQVQEQLSQANSKLEEKDKALQAAEAEVAAHNRRIQLLEEDLERSEERLKIATQKLEEASQAADESERMRKMLEHRSITDEERMDGLEGQLKEARTMAEDADRKYDEVARKLAMVEADLERAEERAETGETKIVELEEELRVVGNNLKSLEVSEEKALQKEETYEGQIRQMTSRLQEAEARAEFAERSVQKLQKEVDRLEDELVQEKEKYKAISDELDQTFSELTGY.

The segment at 1–41 (MDAIKKKMQAMKLEKDNAVDRAETAEQQSRDAALRAEKAEE) is disordered. Residues 1–284 (MDAIKKKMQA…DQTFSELTGY (284 aa)) are a coiled coil. The segment covering 12–41 (KLEKDNAVDRAETAEQQSRDAALRAEKAEE) has biased composition (basic and acidic residues).

The protein belongs to the tropomyosin family. In terms of assembly, homodimer.

Functionally, tropomyosin, in association with the troponin complex, plays a central role in the calcium dependent regulation of muscle contraction. This is Tropomyosin from Haemaphysalis longicornis (Bush tick).